Here is a 341-residue protein sequence, read N- to C-terminus: Thromboxane A2 receptor (341 aa).

Topologically, residues 1–29 (MWLNSTSLGACFRPVNITLQERRAIASPW) are extracellular. N-linked (GlcNAc...) asparagine glycosylation is found at asparagine 4 and asparagine 16. The helical transmembrane segment at 30–52 (FAASFCALGLGSNLLALSVLAGA) threads the bilayer. Topologically, residues 53–65 (RPGAGPRSSFLAL) are cytoplasmic. Residues 66-86 (LCGLVLTDFLGLLVTGAVVAS) traverse the membrane as a helical segment. Topologically, residues 87 to 105 (QHAALLDWRATDPGCRLCH) are extracellular. Residues cysteine 104 and cysteine 181 are joined by a disulfide bond. The chain crosses the membrane as a helical span at residues 106-127 (FMGAAMVFFGLCPLLLGAAMAA). Over 128-147 (ERFVGITRPFSRPAATSRRA) the chain is Cytoplasmic. The helical transmembrane segment at 148–170 (WATVGLVWVGAGTLGLLPLLGLG) threads the bilayer. Topologically, residues 171-191 (RYSVQYPGSWCFLTLGAERGD) are extracellular. The helical transmembrane segment at 192–217 (VAFGLMFALLGSVSVGLSLLLNTVSV) threads the bilayer. Residues 218 to 244 (ATLCRVYHAREATQRPRDCEVEMMVQL) are Cytoplasmic-facing. The helical transmembrane segment at 245–268 (VGIMVVATVCWMPLLVFILQTLLQ) threads the bilayer. Topologically, residues 269-287 (TLPVMSPSGQLLRTTERQL) are extracellular. Residues 288–309 (LIYLRVATWNQILDPWVYILFR) traverse the membrane as a helical segment. Topologically, residues 310–341 (RSVLRRLHPRFTSQLQAVSLHSPPTQAMLSGP) are cytoplasmic. The residue at position 328 (serine 328) is a Phosphoserine.

This sequence belongs to the G-protein coupled receptor 1 family. Interacts with RPGRIP1L. Interacts with RACK1; the interaction regulates TBXA2R cell surface expression. In the brain, expressed in all types of glial cells. In the kidney, expressed in the mesangial cells of the glomerulus, smooth muscle cells of the renal arterioles, and in transitional cell epithelium of renal pelvis.

It is found in the cell membrane. Receptor for thromboxane A2 (TXA2), a potent stimulator of platelet aggregation. The activity of this receptor is mediated by a G-protein that activates a phosphatidylinositol-calcium second messenger system. In the kidney, the binding of TXA2 to glomerular TP receptors causes intense vasoconstriction. Activates phospholipase C and adenylyl cyclase. In Rattus norvegicus (Rat), this protein is Thromboxane A2 receptor (Tbxa2r).